The chain runs to 479 residues: Bifunctional protein HldE (479 aa).

Positions 1–322 are ribokinase; the sequence is MLAETQLAPI…AALERTAAQI (322 aa). 198 to 201 is a binding site for ATP; sequence NRRE. Aspartate 267 is a catalytic residue. A cytidylyltransferase region spans residues 350 to 479; the sequence is FTNGCFDLVH…TSSLVAKART (130 aa).

This sequence in the N-terminal section; belongs to the carbohydrate kinase PfkB family. In the C-terminal section; belongs to the cytidylyltransferase family. In terms of assembly, homodimer.

The catalysed reaction is D-glycero-beta-D-manno-heptose 7-phosphate + ATP = D-glycero-beta-D-manno-heptose 1,7-bisphosphate + ADP + H(+). It catalyses the reaction D-glycero-beta-D-manno-heptose 1-phosphate + ATP + H(+) = ADP-D-glycero-beta-D-manno-heptose + diphosphate. It participates in nucleotide-sugar biosynthesis; ADP-L-glycero-beta-D-manno-heptose biosynthesis; ADP-L-glycero-beta-D-manno-heptose from D-glycero-beta-D-manno-heptose 7-phosphate: step 1/4. The protein operates within nucleotide-sugar biosynthesis; ADP-L-glycero-beta-D-manno-heptose biosynthesis; ADP-L-glycero-beta-D-manno-heptose from D-glycero-beta-D-manno-heptose 7-phosphate: step 3/4. In terms of biological role, catalyzes the phosphorylation of D-glycero-D-manno-heptose 7-phosphate at the C-1 position to selectively form D-glycero-beta-D-manno-heptose-1,7-bisphosphate. Functionally, catalyzes the ADP transfer from ATP to D-glycero-beta-D-manno-heptose 1-phosphate, yielding ADP-D-glycero-beta-D-manno-heptose. The sequence is that of Bifunctional protein HldE from Azorhizobium caulinodans (strain ATCC 43989 / DSM 5975 / JCM 20966 / LMG 6465 / NBRC 14845 / NCIMB 13405 / ORS 571).